The chain runs to 333 residues: Protein pelota homolog (333 aa).

It belongs to the eukaryotic release factor 1 family. Pelota subfamily. Monomer. The cofactor is a divalent metal cation.

It localises to the cytoplasm. May function in recognizing stalled ribosomes, interact with stem-loop structures in stalled mRNA molecules, and effect endonucleolytic cleavage of the mRNA. May play a role in the release non-functional ribosomes and degradation of damaged mRNAs. Has endoribonuclease activity. This Pyrobaculum arsenaticum (strain DSM 13514 / JCM 11321 / PZ6) protein is Protein pelota homolog.